We begin with the raw amino-acid sequence, 475 residues long: tRNA-2-methylthio-N(6)-dimethylallyladenosine synthase (475 aa).

Residues 1 to 20 (MEQNLTTERSETSSSRAGTA) are disordered. The MTTase N-terminal domain maps to 25–145 (KKVFVKTYGC…LPSVVTRARA (121 aa)). Residues C34, C70, C108, C186, C190, and C193 each contribute to the [4Fe-4S] cluster site. The Radical SAM core domain occupies 172–404 (RSRGVTAFLT…QALLAEQQRA (233 aa)). The region spanning 407 to 469 (ESLVGTEIDL…GHSLFCEPAG (63 aa)) is the TRAM domain.

Belongs to the methylthiotransferase family. MiaB subfamily. As to quaternary structure, monomer. It depends on [4Fe-4S] cluster as a cofactor.

The protein resides in the cytoplasm. It catalyses the reaction N(6)-dimethylallyladenosine(37) in tRNA + (sulfur carrier)-SH + AH2 + 2 S-adenosyl-L-methionine = 2-methylsulfanyl-N(6)-dimethylallyladenosine(37) in tRNA + (sulfur carrier)-H + 5'-deoxyadenosine + L-methionine + A + S-adenosyl-L-homocysteine + 2 H(+). Catalyzes the methylthiolation of N6-(dimethylallyl)adenosine (i(6)A), leading to the formation of 2-methylthio-N6-(dimethylallyl)adenosine (ms(2)i(6)A) at position 37 in tRNAs that read codons beginning with uridine. This Chelativorans sp. (strain BNC1) protein is tRNA-2-methylthio-N(6)-dimethylallyladenosine synthase.